A 281-amino-acid chain; its full sequence is 2-dehydro-3-deoxyphosphooctonate aldolase (281 aa).

This sequence belongs to the KdsA family.

It is found in the cytoplasm. It catalyses the reaction D-arabinose 5-phosphate + phosphoenolpyruvate + H2O = 3-deoxy-alpha-D-manno-2-octulosonate-8-phosphate + phosphate. The protein operates within carbohydrate biosynthesis; 3-deoxy-D-manno-octulosonate biosynthesis; 3-deoxy-D-manno-octulosonate from D-ribulose 5-phosphate: step 2/3. Its pathway is bacterial outer membrane biogenesis; lipopolysaccharide biosynthesis. The protein is 2-dehydro-3-deoxyphosphooctonate aldolase of Acidithiobacillus ferrooxidans (strain ATCC 23270 / DSM 14882 / CIP 104768 / NCIMB 8455) (Ferrobacillus ferrooxidans (strain ATCC 23270)).